The sequence spans 198 residues: MERTLQSVVGRRRGSSNRGRGKNSLISTPSYALHPPPRFRYPRWEFVRQTEYSMTACVRKGKLVLTYQYAIWKRVWTIETGFTDPSLFMTPAGTHTTEEIGHLDLFWLRYCSCPHEMPPWLDFLRGTLNLRISCRRALQASVLTSTPRHSLQRLAALQLCTNACLCWYPLGRINDTTPLWLNFSSGKEPTIQQLSGHP.

Positions 1-31 (MERTLQSVVGRRRGSSNRGRGKNSLISTPSY) are disordered. Over residues 10 to 21 (GRRRGSSNRGRG) the composition is skewed to basic residues.

The protein resides in the host cytoplasm. The protein localises to the virion. Functionally, determines virus infectivity. In Bovine immunodeficiency virus (strain R29) (BIV), this protein is Virion infectivity factor (vif).